A 199-amino-acid polypeptide reads, in one-letter code: Interleukin-11 (199 aa).

Residues 1–21 form the signal peptide; it reads MNCVCRLVLVVLSLWPDRVVA. The segment at 182–190 is important for interaction with IL11RA and for the stimulation of cell proliferation; the sequence is HLTLDWAVR.

The protein belongs to the IL-6 superfamily. As to quaternary structure, interacts with either IL11RA1 or IL11RA2 to associate with IL6ST, giving rise to a multimeric signaling complex.

It is found in the secreted. In terms of biological role, cytokine that stimulates the proliferation of hematopoietic stem cells and megakaryocyte progenitor cells and induces megakaryocyte maturation resulting in increased platelet production. Also promotes the proliferation of hepatocytes in response to liver damage. Binding to its receptor formed by IL6ST and either IL11RA1 or IL11RA2 activates a signaling cascade that promotes cell proliferation, also in the context of various cancers. Signaling leads to the activation of intracellular protein kinases and the phosphorylation of STAT3. The interaction with the membrane-bound IL11RA and IL6ST stimulates 'classic signaling', whereas the binding of IL11 and soluble IL11RA to IL6ST stimulates 'trans-signaling'. This Mus musculus (Mouse) protein is Interleukin-11.